The primary structure comprises 141 residues: Large ribosomal subunit protein uL11 (141 aa).

It belongs to the universal ribosomal protein uL11 family. In terms of assembly, part of the ribosomal stalk of the 50S ribosomal subunit. Interacts with L10 and the large rRNA to form the base of the stalk. L10 forms an elongated spine to which L12 dimers bind in a sequential fashion forming a multimeric L10(L12)X complex. In terms of processing, one or more lysine residues are methylated.

Its function is as follows. Forms part of the ribosomal stalk which helps the ribosome interact with GTP-bound translation factors. This is Large ribosomal subunit protein uL11 from Clostridioides difficile (strain 630) (Peptoclostridium difficile).